The sequence spans 432 residues: Gamma-glutamyl phosphate reductase (432 aa).

Belongs to the gamma-glutamyl phosphate reductase family.

The protein localises to the cytoplasm. It carries out the reaction L-glutamate 5-semialdehyde + phosphate + NADP(+) = L-glutamyl 5-phosphate + NADPH + H(+). Its pathway is amino-acid biosynthesis; L-proline biosynthesis; L-glutamate 5-semialdehyde from L-glutamate: step 2/2. Catalyzes the NADPH-dependent reduction of L-glutamate 5-phosphate into L-glutamate 5-semialdehyde and phosphate. The product spontaneously undergoes cyclization to form 1-pyrroline-5-carboxylate. In Methylorubrum populi (strain ATCC BAA-705 / NCIMB 13946 / BJ001) (Methylobacterium populi), this protein is Gamma-glutamyl phosphate reductase.